The following is a 278-amino-acid chain: Large ribosomal subunit protein uL2 (278 aa).

The span at 212-221 (NRWLGKRPHN) shows a compositional bias: basic residues. A disordered region spans residues 212–278 (NRWLGKRPHN…ILSSRHNRKK (67 aa)).

It belongs to the universal ribosomal protein uL2 family. Part of the 50S ribosomal subunit. Forms a bridge to the 30S subunit in the 70S ribosome.

Functionally, one of the primary rRNA binding proteins. Required for association of the 30S and 50S subunits to form the 70S ribosome, for tRNA binding and peptide bond formation. It has been suggested to have peptidyltransferase activity; this is somewhat controversial. Makes several contacts with the 16S rRNA in the 70S ribosome. The chain is Large ribosomal subunit protein uL2 from Methylorubrum populi (strain ATCC BAA-705 / NCIMB 13946 / BJ001) (Methylobacterium populi).